Consider the following 400-residue polypeptide: Tryptophan--tRNA ligase (400 aa).

Residues 12–20 carry the 'HIGH' region motif; that stretch reads PTGALHLGH. Positions 173–241 are insert; the sequence is REPGFEQKAL…RLFGYLEGAR (69 aa). The short motif at 265–269 is the 'KMSKS' region element; it reads KMSKS. ATP is bound at residue K268. Residues 280–305 form a disordered region; it reads KASVEKKVRTMPTDPARVRRTDPGDP. The segment covering 295 to 304 has biased composition (basic and acidic residues); sequence ARVRRTDPGD.

Belongs to the class-I aminoacyl-tRNA synthetase family. Homodimer.

It is found in the cytoplasm. It carries out the reaction tRNA(Trp) + L-tryptophan + ATP = L-tryptophyl-tRNA(Trp) + AMP + diphosphate + H(+). This chain is Tryptophan--tRNA ligase (trpS), found in Ralstonia nicotianae (strain ATCC BAA-1114 / GMI1000) (Ralstonia solanacearum).